The chain runs to 375 residues: NADH-ubiquinone oxidoreductase 40 kDa subunit, mitochondrial (375 aa).

A mitochondrion-targeting transit peptide spans 1 to 26 (MAPLTAAMRSTPRIIVSNAFGFQRRA).

The protein belongs to the complex I NDUFA9 subunit family. In terms of assembly, complex I is composed of about 40 different subunits. It depends on FAD as a cofactor.

The protein localises to the mitochondrion matrix. Accessory subunit of the mitochondrial membrane respiratory chain NADH dehydrogenase (Complex I), that is believed not to be involved in catalysis. Complex I functions in the transfer of electrons from NADH to the respiratory chain. The immediate electron acceptor for the enzyme is believed to be ubiquinone. This is NADH-ubiquinone oxidoreductase 40 kDa subunit, mitochondrial (nuo40) from Neurospora crassa (strain ATCC 24698 / 74-OR23-1A / CBS 708.71 / DSM 1257 / FGSC 987).